Reading from the N-terminus, the 216-residue chain is Thymidine kinase (216 aa).

ATP is bound by residues 9-16 (GTMDCGKS) and 86-89 (DEAQ). Glu-87 serves as the catalytic Proton acceptor.

The protein belongs to the thymidine kinase family. Homotetramer.

The protein resides in the cytoplasm. The catalysed reaction is thymidine + ATP = dTMP + ADP + H(+). This is Thymidine kinase from Streptomyces avermitilis (strain ATCC 31267 / DSM 46492 / JCM 5070 / NBRC 14893 / NCIMB 12804 / NRRL 8165 / MA-4680).